The sequence spans 416 residues: MQGHQPAAYTLRKHETEVTCLKVVSWEPYPVLASGDAKGELYLWNLVTRRPFAGYKLETKAQIIYIKWLNNYLIVLSKDHTLRFLQLHNETAVAIRGWAGNQFELQSFKIVYEVPVNTLNFANVVVTHMRESQYRLWCCNTMDSESIDVYEFDVKEQRSLRRLVSGINLYKAIIKAGNWSTGESLDKTGIVMCFLEHNGVVYLGYECGFVLGLQLVERSGENPTIVVSYVSSVHYPEPVLSLCYNEREEVILSSSTNDAIGVHALQAHSVNVSESEIAFFSIEEGIAIKRDLTLINKSIHLPTSKIGHLGCVDGRLIAVDWSGRTLVCEKDETKFCFSKQRSNVLVDESSAGTFDQGKAPRCHIKATSMACIGKQTLRELRGIRRGEKRRTELCANRSWCFTGYEDGSVIMQSFET.

4 WD repeats span residues 13–54 (KHET…PFAG), 58–95 (ETKA…AVAI), 111–147 (VYEV…SESI), and 234–273 (HYPE…VNVS).

It belongs to the WD repeat ASA1 family. In terms of assembly, component of the ASTRA chromatin remodeling machinery complex.

It localises to the nucleus. Component of the ASTRA complex involved in chromatin remodeling. The sequence is that of ASTRA-associated protein 1 (ASA1) from Lachancea thermotolerans (strain ATCC 56472 / CBS 6340 / NRRL Y-8284) (Yeast).